A 1277-amino-acid polypeptide reads, in one-letter code: NPC intracellular cholesterol transporter 1 (1277 aa).

A signal peptide spans 1–22 (MGAHHPALGLLLLLLCPAQVFS). The Lumenal portion of the chain corresponds to 23–269 (QSCVWYGECG…WRIWGLDAMY (247 aa)). 9 disulfide bridges follow: Cys25-Cys74, Cys31-Cys42, Cys63-Cys109, Cys75-Cys113, Cys97-Cys238, Cys100-Cys160, Cys177-Cys184, Cys227-Cys243, and Cys240-Cys247. Cholesterol is bound at residue Asn41. N-linked (GlcNAc...) asparagine glycosylation occurs at Asn70. Residue Gln79 coordinates cholesterol. Asn122 and Asn137 each carry an N-linked (GlcNAc...) asparagine glycan. The segment at 175–205 (LLCGRDARACNATNWIEYMFNKDNGQAPFTI) is important for cholesterol binding and cholesterol transfer from NPC1 to liposomes. N-linked (GlcNAc...) asparagine glycosylation is found at Asn185, Asn222, and Asn228. A helical membrane pass occupies residues 270–290 (VIMWVTYVAFLFVFFGALLAV). Residues 291–350 (WCHRRRYFVSEYTPIDSNIAFSVNSSDKGEASCCDPLGAAFDDCLRRMFTKWGAFCVRNP) are Cytoplasmic-facing. A helical transmembrane segment spans residues 351 to 371 (TCIIFFSLAFITVCSSGLVFV). At 372 to 621 (QVTTNPVELW…ELNRESNSDV (250 aa)) the chain is on the lumenal side. 4 N-linked (GlcNAc...) asparagine glycosylation sites follow: Asn414, Asn459, Asn478, and Asn524. Cystine bridges form between Cys468–Cys479 and Cys516–Cys533. Residues 620 to 785 (DVFTVIISYV…ITCFVSLLGL (166 aa)) enclose the SSD domain. A helical transmembrane segment spans residues 622 to 642 (FTVIISYVVMFLYISLALGHI). Residues 643-653 (QSCSRLLVDSK) lie on the Cytoplasmic side of the membrane. The helical transmembrane segment at 654 to 674 (ISLGIAGILIVLSSVACSLGI) threads the bilayer. At 675–683 (FSYMGMPLT) the chain is on the lumenal side. A helical transmembrane segment spans residues 684–704 (LIVIEVIPFLVLAVGVDNIFI). Residues 705-730 (LVQTYQRDERLQEETLDQQLGRILGE) lie on the Cytoplasmic side of the membrane. A helical membrane pass occupies residues 731–751 (VAPTMFLSSFSETSAFFFGAL). The Lumenal segment spans residues 752–759 (SSMPAVHT). Residues 760-780 (FSLFAGMAVLIDFLLQITCFV) traverse the membrane as a helical segment. The Cytoplasmic portion of the chain corresponds to 781–832 (SLLGLDIKRQEKNHLDILCCVRGADDGQGSHASESYLFRFFKNYFAPLLLKD). Residues 833–853 (WLRPIVVAVFVGVLSFSVAVV) traverse the membrane as a helical segment. Over 854-1097 (NKVDIGLDQS…EQYLTIIDDT (244 aa)) the chain is Lumenal. 2 N-linked (GlcNAc...) asparagine glycosylation sites follow: Asn868 and Asn898. The cysteines at positions 909 and 914 are disulfide-linked. N-linked (GlcNAc...) asparagine glycans are attached at residues Asn916, Asn961, Asn968, and Asn1063. 3 disulfides stabilise this stretch: Cys956–Cys1011, Cys957–Cys979, and Cys967–Cys976. A helical transmembrane segment spans residues 1098-1118 (IFNLSVSLGSIFLVTLVVLGC). Residues 1119-1123 (ELWSA) lie on the Cytoplasmic side of the membrane. Residues 1124–1144 (VIMCITIAMILVNMFGVMWLW) traverse the membrane as a helical segment. Gly1145 is a topological domain (lumenal). The helical transmembrane segment at 1146–1166 (ISLNAVSLVNLVMSCGISVEF) threads the bilayer. Topologically, residues 1167–1194 (CSHITRAFTMSTKGSRVSRAEEALAHMG) are cytoplasmic. Residues 1195-1215 (SSVFSGITLTKFGGIVVLAFA) form a helical membrane-spanning segment. Topologically, residues 1216-1226 (KSQIFEIFYFR) are lumenal. A helical membrane pass occupies residues 1227–1247 (MYLAMVLLGATHGLIFLPVLL). Over 1248 to 1277 (SYIGPSVNKAKRHTTYERYRGTERERLLNF) the chain is Cytoplasmic. The tract at residues 1274 to 1277 (LLNF) is required for location in lysosomes. The Di-leucine motif signature appears at 1274-1277 (LLNF).

This sequence belongs to the patched family. In terms of assembly, interacts (via the second lumenal domain) with NPC2. Interacts with TMEM97; the interaction may decrease NPC1 availability to the cell. Interacts with TIM1. Interacts with SLC38A9; this interaction inhibits cholesterol-mediated mTORC1 activation via its sterol transport activity. N-glycosylated. Detected in liver (at protein level). Ubiquitous. Detected in adult heart, spleen, lung, liver, skeletal muscle, kidney, testis.

Its subcellular location is the late endosome membrane. It is found in the lysosome membrane. The catalysed reaction is cholesterol(in) = cholesterol(out). Its function is as follows. Intracellular cholesterol transporter which acts in concert with NPC2 and plays an important role in the egress of cholesterol from the endosomal/lysosomal compartment. Unesterified cholesterol that has been released from LDLs in the lumen of the late endosomes/lysosomes is transferred by NPC2 to the cholesterol-binding pocket in the N-terminal domain of NPC1. Cholesterol binds to NPC1 with the hydroxyl group buried in the binding pocket. May play a role in vesicular trafficking in glia, a process that may be crucial for maintaining the structural and functional integrity of nerve terminals. Inhibits cholesterol-mediated mTORC1 activation throught its interaction with SLC38A9. This Mus musculus (Mouse) protein is NPC intracellular cholesterol transporter 1.